Consider the following 517-residue polypeptide: Protein ERGIC-53 (517 aa).

Positions 1–30 (MAVSRRRGPQAGAQSFFCALLLSFSQFVGS) are cleaved as a signal peptide. The Lumenal portion of the chain corresponds to 31-484 (DGMGGDAAAP…DLPAFPSCLS (454 aa)). An L-type lectin-like domain is found at 52–275 (RRFEYKYSFK…DVLSFLTFQL (224 aa)). A carbohydrate-binding residues include S96 and D129. Ca(2+) contacts are provided by D160, F162, D163, N164, D165, N169, and N170. N164 is a binding site for a carbohydrate. H186 is an a carbohydrate binding site. Position 189 (D189) interacts with Ca(2+). C198 and C238 are oxidised to a cystine. Residue 259–261 (GGL) coordinates a carbohydrate. 2 disordered regions span residues 276 to 297 (TEPG…KEKY) and 377 to 396 (EISR…SQQE). Residues 278–297 (PGKEPPTPEKDISEKEKEKY) show a composition bias toward basic and acidic residues. Residue S433 is modified to Phosphoserine. A helical transmembrane segment spans residues 485–505 (TVHFVIFIVVQTVLFIGYIMY). At 506–517 (RTQQEAAAKKFF) the chain is on the cytoplasmic side. The tract at residues 506–517 (RTQQEAAAKKFF) is mediates interaction with RAB3GAP1, RAB3GAP2 and UBXN6. The short motif at 516 to 517 (FF) is the ER export motif element.

Exists both as a covalent disulfide-linked homohexamer, and a complex of three disulfide-linked dimers non-covalently kept together. Interacts with MCFD2. May interact with TMEM115. Interacts with RAB3GAP1 and RAB3GAP2. Interacts with UBXN6. Interacts with SERPINA1/alpha1-antitrypsin. Interacts with BET1.

The protein resides in the endoplasmic reticulum-Golgi intermediate compartment membrane. It is found in the golgi apparatus membrane. It localises to the endoplasmic reticulum membrane. Functionally, mannose-specific lectin. May recognize sugar residues of glycoproteins, glycolipids, or glycosylphosphatidyl inositol anchors and may be involved in the sorting or recycling of proteins, lipids, or both. The LMAN1-MCFD2 complex forms a specific cargo receptor for the ER-to-Golgi transport of selected proteins. The chain is Protein ERGIC-53 (Lman1) from Rattus norvegicus (Rat).